The following is a 162-amino-acid chain: uncharacterized protein (162 aa).

Positions Met1–Ala24 are cleaved as a signal peptide.

This is an uncharacterized protein from Mycobacterium bovis (strain ATCC BAA-935 / AF2122/97).